The primary structure comprises 142 residues: Large ribosomal subunit protein uL13 (142 aa).

The protein belongs to the universal ribosomal protein uL13 family. Part of the 50S ribosomal subunit.

In terms of biological role, this protein is one of the early assembly proteins of the 50S ribosomal subunit, although it is not seen to bind rRNA by itself. It is important during the early stages of 50S assembly. The sequence is that of Large ribosomal subunit protein uL13 from Photorhabdus laumondii subsp. laumondii (strain DSM 15139 / CIP 105565 / TT01) (Photorhabdus luminescens subsp. laumondii).